The following is a 944-amino-acid chain: Protein translocase subunit SecA (944 aa).

Residues Q77, G95–T99, and D484 contribute to the ATP site. Residues E920–G944 form a disordered region. The span at P933 to G944 shows a compositional bias: basic and acidic residues.

It belongs to the SecA family. As to quaternary structure, monomer and homodimer. Part of the essential Sec protein translocation apparatus which comprises SecA, SecYEG and auxiliary proteins SecDF. Other proteins may also be involved.

The protein resides in the cell membrane. It is found in the cytoplasm. The catalysed reaction is ATP + H2O + cellular proteinSide 1 = ADP + phosphate + cellular proteinSide 2.. Part of the Sec protein translocase complex. Interacts with the SecYEG preprotein conducting channel. Has a central role in coupling the hydrolysis of ATP to the transfer of proteins into and across the cell membrane, serving as an ATP-driven molecular motor driving the stepwise translocation of polypeptide chains across the membrane. The protein is Protein translocase subunit SecA of Mycoplasma capricolum subsp. capricolum (strain California kid / ATCC 27343 / NCTC 10154).